Here is a 439-residue protein sequence, read N- to C-terminus: Homogentisate 1,2-dioxygenase (439 aa).

Residue H293 is the Proton acceptor of the active site. Fe cation contacts are provided by H336 and E342. Homogentisate contacts are provided by Y351 and H372. Position 372 (H372) interacts with Fe cation.

It belongs to the homogentisate dioxygenase family. Hexamer; dimer of trimers. It depends on Fe cation as a cofactor.

It carries out the reaction homogentisate + O2 = 4-maleylacetoacetate + H(+). It participates in amino-acid degradation; L-phenylalanine degradation; acetoacetate and fumarate from L-phenylalanine: step 4/6. Functionally, involved in the catabolism of homogentisate (2,5-dihydroxyphenylacetate or 2,5-OH-PhAc), a central intermediate in the degradation of phenylalanine and tyrosine. Catalyzes the oxidative ring cleavage of the aromatic ring of homogentisate to yield maleylacetoacetate. The sequence is that of Homogentisate 1,2-dioxygenase from Cupriavidus necator (strain ATCC 17699 / DSM 428 / KCTC 22496 / NCIMB 10442 / H16 / Stanier 337) (Ralstonia eutropha).